The primary structure comprises 73 residues: Exodeoxyribonuclease 7 small subunit (73 aa).

It belongs to the XseB family. In terms of assembly, heterooligomer composed of large and small subunits.

It is found in the cytoplasm. It catalyses the reaction Exonucleolytic cleavage in either 5'- to 3'- or 3'- to 5'-direction to yield nucleoside 5'-phosphates.. Bidirectionally degrades single-stranded DNA into large acid-insoluble oligonucleotides, which are then degraded further into small acid-soluble oligonucleotides. The protein is Exodeoxyribonuclease 7 small subunit of Streptococcus mutans serotype c (strain ATCC 700610 / UA159).